Consider the following 603-residue polypeptide: Glutamyl-tRNA(Gln) amidotransferase subunit B, mitochondrial (603 aa).

The N-terminal 32 residues, 1–32 (MIRHRLRLALSAAPVTATGRRTRSKTAPRRSL), are a transit peptide targeting the mitochondrion. The disordered stretch occupies residues 12–59 (AAPVTATGRRTRSKTAPRRSLSTQQTQSSASSSSNNLDGDGRAFVPLR). The span at 31-48 (SLSTQQTQSSASSSSNNL) shows a compositional bias: low complexity.

It belongs to the GatB/GatE family. GatB subfamily. Subunit of the heterotrimeric GatCAB amidotransferase (AdT) complex, composed of A, B and C subunits.

The protein resides in the mitochondrion. It carries out the reaction L-glutamyl-tRNA(Gln) + L-glutamine + ATP + H2O = L-glutaminyl-tRNA(Gln) + L-glutamate + ADP + phosphate + H(+). Allows the formation of correctly charged Gln-tRNA(Gln) through the transamidation of misacylated Glu-tRNA(Gln) in the mitochondria. The reaction takes place in the presence of glutamine and ATP through an activated gamma-phospho-Glu-tRNA(Gln). This is Glutamyl-tRNA(Gln) amidotransferase subunit B, mitochondrial from Arthroderma otae (strain ATCC MYA-4605 / CBS 113480) (Microsporum canis).